Reading from the N-terminus, the 167-residue chain is Low molecular mass early light-inducible protein HV60, chloroplastic (167 aa).

The transit peptide at 1-33 (MATMMAMSSFAGAAVLPRGSARSLPALGRRTLV) directs the protein to the chloroplast. The next 2 helical transmembrane spans lie at 101-121 (GQAW…VPLL) and 145-165 (FAMI…TPFI).

It belongs to the ELIP/psbS family.

The protein resides in the plastid. Its subcellular location is the chloroplast membrane. Its function is as follows. Probably involved in the integration of pigments into the mature pigment-protein complexes. This Hordeum vulgare (Barley) protein is Low molecular mass early light-inducible protein HV60, chloroplastic.